Reading from the N-terminus, the 169-residue chain is Ribosome maturation factor RimM (169 aa).

Positions 97 to 169 constitute a PRC barrel domain; that stretch reads EDEYYWTDLV…IITADWGLDY (73 aa).

Belongs to the RimM family. In terms of assembly, binds ribosomal protein uS19.

It localises to the cytoplasm. In terms of biological role, an accessory protein needed during the final step in the assembly of 30S ribosomal subunit, possibly for assembly of the head region. Essential for efficient processing of 16S rRNA. May be needed both before and after RbfA during the maturation of 16S rRNA. It has affinity for free ribosomal 30S subunits but not for 70S ribosomes. In Neisseria meningitidis serogroup C / serotype 2a (strain ATCC 700532 / DSM 15464 / FAM18), this protein is Ribosome maturation factor RimM.